The primary structure comprises 227 residues: 4'-phosphopantetheinyl transferase PptT (227 aa).

Residues arginine 48, arginine 56, 75 to 78, 92 to 93, and aspartate 114 contribute to the CoA site; these read KGDK and TH. 3 residues coordinate Mg(2+): aspartate 114, alanine 115, and glutamate 116. Glutamate 157, lysine 161, and leucine 171 together coordinate CoA.

It belongs to the P-Pant transferase superfamily. The cofactor is Mg(2+).

It catalyses the reaction apo-[ACP] + CoA = holo-[ACP] + adenosine 3',5'-bisphosphate + H(+). With respect to regulation, inhibited by the amidino-urea compound 1-[(2,6-diethylphenyl)-3-N-ethylcarbamimodoyl]urea (compound 8918). It acts by binding to the phosphopantetheine pocket in the active site. Inhibition by compound 8918 kills M.tuberculosis. Transfers the 4'-phosphopantetheine moiety from coenzyme A to a Ser of acyl-carrier-protein. Involved in post-translational modification of various type-I polyketide synthases required for the formation of both mycolic acids and lipid virulence factors. Acts on Pks13, Mas, PpsA, PpsB, PpsC and PpsD. Also acts on AcpM, the meromycolate extension acyl carrier protein. In addition, is involved in the activation of the acyl carrier protein MbtL and the nonribosomal peptides synthases MbtB and MbtE, which are involved in the biosynthesis of the siderophore mycobactin. Functionally, required for the replication and survival of Mycobacterium during the acute and chronic phases of infection in mice. The sequence is that of 4'-phosphopantetheinyl transferase PptT from Mycobacterium tuberculosis (strain ATCC 25618 / H37Rv).